Reading from the N-terminus, the 182-residue chain is ATP-dependent protease subunit HslV (182 aa).

Residue threonine 10 is part of the active site. The Na(+) site is built by alanine 166, cysteine 169, and serine 172.

The protein belongs to the peptidase T1B family. HslV subfamily. As to quaternary structure, a double ring-shaped homohexamer of HslV is capped on each side by a ring-shaped HslU homohexamer. The assembly of the HslU/HslV complex is dependent on binding of ATP.

Its subcellular location is the cytoplasm. The enzyme catalyses ATP-dependent cleavage of peptide bonds with broad specificity.. Allosterically activated by HslU binding. Functionally, protease subunit of a proteasome-like degradation complex believed to be a general protein degrading machinery. The polypeptide is ATP-dependent protease subunit HslV (Rickettsia bellii (strain OSU 85-389)).